The chain runs to 156 residues: Ribosomal RNA large subunit methyltransferase H (156 aa).

S-adenosyl-L-methionine is bound by residues Gly-104 and 123–128 (LSALTL).

This sequence belongs to the RNA methyltransferase RlmH family. Homodimer.

It localises to the cytoplasm. It catalyses the reaction pseudouridine(1915) in 23S rRNA + S-adenosyl-L-methionine = N(3)-methylpseudouridine(1915) in 23S rRNA + S-adenosyl-L-homocysteine + H(+). Specifically methylates the pseudouridine at position 1915 (m3Psi1915) in 23S rRNA. The sequence is that of Ribosomal RNA large subunit methyltransferase H from Nitrosospira multiformis (strain ATCC 25196 / NCIMB 11849 / C 71).